The chain runs to 407 residues: Lysosome-associated membrane glycoprotein 1 (407 aa).

The signal sequence occupies residues 1–21 (MAAPGAPRSLLLLLLAGLAHG). Residues 22–189 (ASALFVVKDS…SKEETRCTQD (168 aa)) form a first lumenal domain region. The Lumenal portion of the chain corresponds to 22–371 (ASALFVVKDS…VEECMQDGNN (350 aa)). 12 N-linked (GlcNAc...) asparagine glycosylation sites follow: Asn32, Asn40, Asn57, Asn72, Asn79, Asn98, Asn102, Asn116, Asn125, Asn145, Asn160, and Asn178. Cys36 and Cys75 are oxidised to a cystine. A disulfide bridge connects residues Cys150 and Cys186. A disordered region spans residues 183-206 (ETRCTQDGPSPTTVPPSPSPPLVP). The segment at 190–219 (GPSPTTVPPSPSPPLVPTNPTVIKYNVTGE) is hinge. Over residues 194–206 (TTVPPSPSPPLVP) the composition is skewed to pro residues. 9 N-linked (GlcNAc...) asparagine glycosylation sites follow: Asn215, Asn220, Asn233, Asn241, Asn253, Asn283, Asn297, Asn304, and Asn312. Residues 220 to 371 (NGTCLLASMA…VEECMQDGNN (152 aa)) form a second lumenal domain region. Cys223 and Cys260 are oxidised to a cystine. An intrachain disulfide couples Cys328 to Cys365. Residues 372 to 395 (MLIPIAVGGALAGLVLIVLIAYLI) traverse the membrane as a helical segment. Residues 396–407 (GRKRSHAGYQTI) are Cytoplasmic-facing.

Belongs to the LAMP family. Interacts with ABCB9; this interaction strongly stabilizes ABCB9 and protects ABCB9 against lysosomal degradation. Interacts with FURIN. Interacts with TMEM175; inhibiting the proton channel activity of TMEM175. O- and N-glycosylated; some of the N-glycans attached to LAMP-1 are polylactosaminoglycans.

The protein resides in the lysosome membrane. It is found in the endosome membrane. The protein localises to the late endosome membrane. Its subcellular location is the cell membrane. It localises to the cytolytic granule membrane. Functionally, lysosomal membrane glycoprotein which plays an important role in lysosome biogenesis, lysosomal pH regulation, autophagy and cholesterol homeostasis. Acts as an important regulator of lysosomal lumen pH regulation by acting as a direct inhibitor of the proton channel TMEM175, facilitating lysosomal acidification for optimal hydrolase activity. Also plays an important role in NK-cells cytotoxicity. Mechanistically, participates in cytotoxic granule movement to the cell surface and perforin trafficking to the lytic granule. In addition, protects NK-cells from degranulation-associated damage induced by their own cytotoxic granule content. Presents carbohydrate ligands to selectins. The sequence is that of Lysosome-associated membrane glycoprotein 1 (LAMP1) from Cricetulus griseus (Chinese hamster).